Reading from the N-terminus, the 426-residue chain is MKQLRLEPVVQVRGEINIPGSKSISNRALLLATLAKGTTTLTNLLDSDDIRHMLASLKQLGVGYRLSQNNTVCELTGLGGAISADTAQTLFLGNAGTAMRPLCAALTLGRGEFTLTGEPRMEERPIGDLVDALKQLGANIMYLKNEGFPPLTINATGLNGGDVEIAGDLSSQFLTALLMVAPLAKGSVNIHVKGELVSKPYIDITLALMAQFGVQVINHDYARFEILAGQQYVSPGKVLVEGDASSASYFLAAGAIKGGEVKVTGVGRLSIQGDVKFADVLEKMGADIEWGDDYIIARGAPLTAVDLDMNHIPDAAMTIATAALFAKGTTTIRNIYNWRIKETDRLAAMATELRKVGALVEEGHDYIQITPPAVLNTAEIDTYNDHRMAMCFSMMAFADCGITINDPDCTSKTFPDYFAQFASLKA.

Residues Lys22, Ser23, and Arg27 each coordinate 3-phosphoshikimate. Lys22 contacts phosphoenolpyruvate. The phosphoenolpyruvate site is built by Gly96 and Arg124. Positions 170, 171, 172, 198, 314, 337, and 341 each coordinate 3-phosphoshikimate. Gln172 is a phosphoenolpyruvate binding site. The active-site Proton acceptor is the Asp314. Phosphoenolpyruvate contacts are provided by Arg345, Arg387, and Lys412.

Belongs to the EPSP synthase family. In terms of assembly, monomer.

The protein localises to the cytoplasm. It catalyses the reaction 3-phosphoshikimate + phosphoenolpyruvate = 5-O-(1-carboxyvinyl)-3-phosphoshikimate + phosphate. Its pathway is metabolic intermediate biosynthesis; chorismate biosynthesis; chorismate from D-erythrose 4-phosphate and phosphoenolpyruvate: step 6/7. Its function is as follows. Catalyzes the transfer of the enolpyruvyl moiety of phosphoenolpyruvate (PEP) to the 5-hydroxyl of shikimate-3-phosphate (S3P) to produce enolpyruvyl shikimate-3-phosphate and inorganic phosphate. The sequence is that of 3-phosphoshikimate 1-carboxyvinyltransferase from Shewanella sp. (strain MR-7).